Here is a 189-residue protein sequence, read N- to C-terminus: Movement protein p22 (189 aa).

It belongs to the tombusvirus/aureusvirus movement protein p22 family. As to quaternary structure, interacts with host protein HFI22. Phosphorylated.

The protein localises to the host membrane. In terms of biological role, cell-to-cell movement. Displays RNA-binding activity. This Capsicum annuum (Capsicum pepper) protein is Movement protein p22.